The primary structure comprises 677 residues: Forkhead box protein P1 (677 aa).

Residues 1 to 18 (MMQESGTETKSNGSAIQN) show a composition bias toward polar residues. A disordered region spans residues 1–43 (MMQESGTETKSNGSAIQNGSGGSNHLLECGGLREGRSNGETPA). Phosphoserine is present on serine 83. Over residues 270 to 283 (IMNPHASTNGQLSV) the composition is skewed to polar residues. Residues 270-298 (IMNPHASTNGQLSVHTPKRESLSHEEHPH) are disordered. A compositionally biased stretch (basic and acidic residues) spans 286-298 (PKRESLSHEEHPH). Residue lysine 287 forms a Glycyl lysine isopeptide (Lys-Gly) (interchain with G-Cter in SUMO2) linkage. The segment at 306–331 (GVCKWPGCEAVCEDFQSFLKHLNSEH) adopts a C2H2-type zinc-finger fold. Residues 348-369 (VQQLELQLAKDKERLQAMMTHL) form a leucine-zipper region. Glycyl lysine isopeptide (Lys-Gly) (interchain with G-Cter in SUMO2) cross-links involve residues lysine 372 and lysine 377. Residues 382-386 (PLNLV) form a CTBP1-binding region. Residues 390–403 (TLSKSASEASPQSL) show a composition bias toward polar residues. Positions 390–422 (TLSKSASEASPQSLPHTPTTPTAPLTPVTQGPS) are disordered. Low complexity predominate over residues 404–418 (PHTPTTPTAPLTPVT). Lysine 442 participates in a covalent cross-link: Glycyl lysine isopeptide (Lys-Gly) (interchain with G-Cter in SUMO2). Residues 465–555 (RPPFTYASLI…PQKISGNPSL (91 aa)) constitute a DNA-binding region (fork-head). The segment at 611–677 (EHTNSNESDS…EDEPVNEDME (67 aa)) is disordered. Residues 612-623 (HTNSNESDSSPG) are compositionally biased toward polar residues. A Phosphothreonine modification is found at threonine 653. Serine 658 bears the Phosphoserine mark. Positions 667 to 677 (YEDEPVNEDME) are enriched in acidic residues.

Forms homodimers and heterodimers with FOXP2 and FOXP4. Dimerization is required for DNA-binding. Self-associates. Interacts with CTBP1. Interacts with NCOR2 and AR. Interacts with FOXP2. Interacts with TBR1. Interacts with AURKA; this interaction facilitates the phosphorylation of FOXP1, which suppresses the expression of FBXL7. Interacts with ZMYM2. Isoform 8 is specifically expressed in embryonic stem cells.

The protein resides in the nucleus. Transcriptional repressor. Can act with CTBP1 to synergistically repress transcription but CTPBP1 is not essential. Plays an important role in the specification and differentiation of lung epithelium. Acts cooperatively with FOXP4 to regulate lung secretory epithelial cell fate and regeneration by restricting the goblet cell lineage program; the function may involve regulation of AGR2. Essential transcriptional regulator of B-cell development. Involved in regulation of cardiac muscle cell proliferation. Involved in the columnar organization of spinal motor neurons. Promotes the formation of the lateral motor neuron column (LMC) and the preganglionic motor column (PGC) and is required for respective appropriate motor axon projections. The segment-appropriate generation of spinal cord motor columns requires cooperation with other Hox proteins. Can regulate PITX3 promoter activity; may promote midbrain identity in embryonic stem cell-derived dopamine neurons by regulating PITX3. Negatively regulates the differentiation of T follicular helper cells T(FH)s. Involved in maintenance of hair follicle stem cell quiescence; the function probably involves regulation of FGF18. Represses transcription of various pro-apoptotic genes and cooperates with NF-kappa B-signaling in promoting B-cell expansion by inhibition of caspase-dependent apoptosis. Binds to CSF1R promoter elements and is involved in regulation of monocyte differentiation and macrophage functions; repression of CSF1R in monocytes seems to involve NCOR2 as corepressor. Involved in endothelial cell proliferation, tube formation and migration indicative for a role in angiogenesis; the role in neovascularization seems to implicate suppression of SEMA5B. Can negatively regulate androgen receptor signaling. Acts as a transcriptional activator of the FBXL7 promoter; this activity is regulated by AURKA. In terms of biological role, involved in transcriptional regulation in embryonic stem cells (ESCs). Stimulates expression of transcription factors that are required for pluripotency and decreases expression of differentiation-associated genes. Has distinct DNA-binding specifities as compared to the canonical form and preferentially binds DNA with the sequence 5'-CGATACAA-3' (or closely related sequences). Promotes ESC self-renewal and pluripotency. In Homo sapiens (Human), this protein is Forkhead box protein P1 (FOXP1).